The following is a 261-amino-acid chain: Cytochrome c oxidase subunit 3 (261 aa).

Residues Met-1–Pro-15 lie on the Mitochondrial matrix side of the membrane. A helical membrane pass occupies residues Trp-16–Trp-34. Residues Phe-35–Cys-40 lie on the Mitochondrial intermembrane side of the membrane. A helical membrane pass occupies residues Ile-41 to Thr-66. Residues Phe-67–Thr-72 are Mitochondrial matrix-facing. Residues Ser-73 to Ser-105 traverse the membrane as a helical segment. Topologically, residues Leu-106–Glu-128 are mitochondrial intermembrane. A helical transmembrane segment spans residues Val-129 to Thr-152. Residues Glu-153–Asn-155 are Mitochondrial matrix-facing. Residues Arg-156–Glu-183 traverse the membrane as a helical segment. Residues Thr-184–Asp-190 lie on the Mitochondrial intermembrane side of the membrane. Residues Gly-191–Leu-223 traverse the membrane as a helical segment. Over Gln-224 to His-232 the chain is Mitochondrial matrix. The chain crosses the membrane as a helical span at residues Phe-233–Ile-256. The Mitochondrial intermembrane segment spans residues Tyr-257–Ser-261.

This sequence belongs to the cytochrome c oxidase subunit 3 family. As to quaternary structure, component of the cytochrome c oxidase (complex IV, CIV), a multisubunit enzyme composed of 14 subunits. The complex is composed of a catalytic core of 3 subunits MT-CO1, MT-CO2 and MT-CO3, encoded in the mitochondrial DNA, and 11 supernumerary subunits COX4I, COX5A, COX5B, COX6A, COX6B, COX6C, COX7A, COX7B, COX7C, COX8 and NDUFA4, which are encoded in the nuclear genome. The complex exists as a monomer or a dimer and forms supercomplexes (SCs) in the inner mitochondrial membrane with NADH-ubiquinone oxidoreductase (complex I, CI) and ubiquinol-cytochrome c oxidoreductase (cytochrome b-c1 complex, complex III, CIII), resulting in different assemblies (supercomplex SCI(1)III(2)IV(1) and megacomplex MCI(2)III(2)IV(2)).

It localises to the mitochondrion inner membrane. The enzyme catalyses 4 Fe(II)-[cytochrome c] + O2 + 8 H(+)(in) = 4 Fe(III)-[cytochrome c] + 2 H2O + 4 H(+)(out). In terms of biological role, component of the cytochrome c oxidase, the last enzyme in the mitochondrial electron transport chain which drives oxidative phosphorylation. The respiratory chain contains 3 multisubunit complexes succinate dehydrogenase (complex II, CII), ubiquinol-cytochrome c oxidoreductase (cytochrome b-c1 complex, complex III, CIII) and cytochrome c oxidase (complex IV, CIV), that cooperate to transfer electrons derived from NADH and succinate to molecular oxygen, creating an electrochemical gradient over the inner membrane that drives transmembrane transport and the ATP synthase. Cytochrome c oxidase is the component of the respiratory chain that catalyzes the reduction of oxygen to water. Electrons originating from reduced cytochrome c in the intermembrane space (IMS) are transferred via the dinuclear copper A center (CU(A)) of subunit 2 and heme A of subunit 1 to the active site in subunit 1, a binuclear center (BNC) formed by heme A3 and copper B (CU(B)). The BNC reduces molecular oxygen to 2 water molecules using 4 electrons from cytochrome c in the IMS and 4 protons from the mitochondrial matrix. The polypeptide is Cytochrome c oxidase subunit 3 (MT-CO3) (Petromyzon marinus (Sea lamprey)).